Consider the following 92-residue polypeptide: MTRSLKKNPFVANHLLKKIEKLNTKAEKEIIVTWSRASTIIPTMIGHTIAIHNGKEHLPIYITDSMVGHKLGEFAPTLNFRGHAKSDNRSRR.

It belongs to the universal ribosomal protein uS19 family.

The protein localises to the plastid. The protein resides in the chloroplast. In terms of biological role, protein S19 forms a complex with S13 that binds strongly to the 16S ribosomal RNA. This Nicotiana tomentosiformis (Tobacco) protein is Small ribosomal subunit protein uS19c.